Reading from the N-terminus, the 141-residue chain is ATP synthase epsilon chain (141 aa).

It belongs to the ATPase epsilon chain family. As to quaternary structure, F-type ATPases have 2 components, CF(1) - the catalytic core - and CF(0) - the membrane proton channel. CF(1) has five subunits: alpha(3), beta(3), gamma(1), delta(1), epsilon(1). CF(0) has three main subunits: a, b and c.

The protein localises to the cell membrane. Produces ATP from ADP in the presence of a proton gradient across the membrane. The protein is ATP synthase epsilon chain (atpC) of Mycoplasmopsis pulmonis (strain UAB CTIP) (Mycoplasma pulmonis).